Consider the following 142-residue polypeptide: Large ribosomal subunit protein uL11 (142 aa).

Belongs to the universal ribosomal protein uL11 family. In terms of assembly, part of the ribosomal stalk of the 50S ribosomal subunit. Interacts with L10 and the large rRNA to form the base of the stalk. L10 forms an elongated spine to which L12 dimers bind in a sequential fashion forming a multimeric L10(L12)X complex. In terms of processing, one or more lysine residues are methylated.

In terms of biological role, forms part of the ribosomal stalk which helps the ribosome interact with GTP-bound translation factors. In Sinorhizobium medicae (strain WSM419) (Ensifer medicae), this protein is Large ribosomal subunit protein uL11.